The primary structure comprises 259 residues: Formate channel BtFdhC (259 aa).

The Cytoplasmic segment spans residues 1–26 (MAFHKPEQIAELVIEAGVQKVSQTLP). The chain crosses the membrane as a helical span at residues 27–47 (AMLILGFLGGAFISLGFLLNI). The Periplasmic portion of the chain corresponds to 48 to 66 (RVLGNLPERWGSLVNVLGG). Residues 67–97 (AVFPVGLMLVVLAGGELITGNMMSLSMALYA) form a helical membrane-spanning segment. Topologically, residues 98–108 (KKITLVSVLNN) are cytoplasmic. A helical transmembrane segment spans residues 109–130 (WVWITFMNFVGAIFVAYCFGHL). Over 131–157 (GGLTEGDYLNKTVAIAEGKLHESFGRT) the chain is Periplasmic. Residues 158–176 (LILAIGCNWLVCLALWLAY) form a helical membrane-spanning segment. Residues 177–187 (GTSDFVGKIIG) are Cytoplasmic-facing. A helical transmembrane segment spans residues 188–216 (IWIPIMAFVVIGFQQVVANMFVISAVIFA). Residues 217 to 227 (GHLTWMDLARN) are Periplasmic-facing. Residues 228 to 250 (FVPVFIGNVIGGAGFVGFAYFAC) traverse the membrane as a helical segment. Residues 251–259 (YQKQHSNMK) lie on the Cytoplasmic side of the membrane.

This sequence belongs to the FNT transporter (TC 1.A.16) family.

Its subcellular location is the cell inner membrane. It carries out the reaction formate(in) = formate(out). Acts as a formate transporter. The chain is Formate channel BtFdhC from Bacillus thuringiensis.